Consider the following 586-residue polypeptide: Asparagine synthetase, nodule [glutamine-hydrolyzing] (586 aa).

The active-site For GATase activity is the Cys-2. Residues 2–185 form the Glutamine amidotransferase type-2 domain; that stretch reads CGILAVLGCS…PGHLYSSKER (184 aa). L-glutamine is bound by residues 50–54, 75–77, and Asp-98; these read RLAIV and NGE. One can recognise an Asparagine synthetase domain in the interval 193–517; it reads PPWFNEAIIP…PQNSARLTVP (325 aa). ATP-binding positions include Leu-232, Val-268, and 342–343; that span reads SG.

Root nodules.

The catalysed reaction is L-aspartate + L-glutamine + ATP + H2O = L-asparagine + L-glutamate + AMP + diphosphate + H(+). The protein operates within amino-acid biosynthesis; L-asparagine biosynthesis; L-asparagine from L-aspartate (L-Gln route): step 1/1. The sequence is that of Asparagine synthetase, nodule [glutamine-hydrolyzing] (AS1) from Pisum sativum (Garden pea).